The primary structure comprises 271 residues: Protein-L-isoaspartate O-methyltransferase (271 aa).

A compositionally biased stretch (pro residues) spans 1–15 (MRKPVTPPGNPPRPR). The segment at 1–60 (MRKPVTPPGNPPRPRSPGYGSTSLAPGITAANSNTRISPPTLARPAPAAGAGGQGGNLGL) is disordered. A compositionally biased stretch (low complexity) spans 39 to 49 (PPTLARPAPAA). S119 is an active-site residue.

Belongs to the methyltransferase superfamily. L-isoaspartyl/D-aspartyl protein methyltransferase family.

Its subcellular location is the cytoplasm. It catalyses the reaction [protein]-L-isoaspartate + S-adenosyl-L-methionine = [protein]-L-isoaspartate alpha-methyl ester + S-adenosyl-L-homocysteine. Catalyzes the methyl esterification of L-isoaspartyl residues in peptides and proteins that result from spontaneous decomposition of normal L-aspartyl and L-asparaginyl residues. It plays a role in the repair and/or degradation of damaged proteins. The chain is Protein-L-isoaspartate O-methyltransferase from Bordetella petrii (strain ATCC BAA-461 / DSM 12804 / CCUG 43448).